Reading from the N-terminus, the 117-residue chain is UPF0102 protein FTN_0424 (117 aa).

Belongs to the UPF0102 family.

This chain is UPF0102 protein FTN_0424, found in Francisella tularensis subsp. novicida (strain U112).